Here is a 251-residue protein sequence, read N- to C-terminus: Lactose phosphotransferase system repressor (251 aa).

An HTH deoR-type domain is found at 3–58; it reads KEERLEEITKLINKRGTIRVTEVVERLKVSDMTVRRDLTELEGLGVLTRIHGGARS. Positions 20–39 form a DNA-binding region, H-T-H motif; sequence IRVTEVVERLKVSDMTVRRD.

In terms of biological role, repressor of the lactose catabolism operon. Galactose-6-phosphate is the inducer. The polypeptide is Lactose phosphotransferase system repressor (lacR) (Streptococcus mutans serotype c (strain ATCC 700610 / UA159)).